A 449-amino-acid polypeptide reads, in one-letter code: Phosphoglucosamine mutase (449 aa).

Ser100 acts as the Phosphoserine intermediate in catalysis. Mg(2+)-binding residues include Ser100, Asp241, Asp243, and Asp245. Ser100 bears the Phosphoserine mark.

This sequence belongs to the phosphohexose mutase family. Mg(2+) serves as cofactor. Activated by phosphorylation.

It catalyses the reaction alpha-D-glucosamine 1-phosphate = D-glucosamine 6-phosphate. Its function is as follows. Catalyzes the conversion of glucosamine-6-phosphate to glucosamine-1-phosphate. This chain is Phosphoglucosamine mutase, found in Clostridium botulinum (strain Loch Maree / Type A3).